A 192-amino-acid chain; its full sequence is A-type ATP synthase subunit E (192 aa).

It belongs to the V-ATPase E subunit family. In terms of assembly, has multiple subunits with at least A(3), B(3), C, D, E, F, H, I and proteolipid K(x).

The protein resides in the cell membrane. Functionally, component of the A-type ATP synthase that produces ATP from ADP in the presence of a proton gradient across the membrane. The protein is A-type ATP synthase subunit E of Metallosphaera sedula (strain ATCC 51363 / DSM 5348 / JCM 9185 / NBRC 15509 / TH2).